The chain runs to 63 residues: Large ribosomal subunit protein bL32c (63 aa).

The disordered stretch occupies residues 38-63 (RSFSGVSEHPKPKGFSRQQTNNRVLG). Over residues 53–63 (SRQQTNNRVLG) the composition is skewed to polar residues.

Belongs to the bacterial ribosomal protein bL32 family.

The protein resides in the plastid. The protein localises to the chloroplast. The chain is Large ribosomal subunit protein bL32c (rpl32) from Oryza sativa (Rice).